A 155-amino-acid chain; its full sequence is Ribosome maturation factor RimP (155 aa).

The protein belongs to the RimP family.

Its subcellular location is the cytoplasm. In terms of biological role, required for maturation of 30S ribosomal subunits. This is Ribosome maturation factor RimP from Parasynechococcus marenigrum (strain WH8102).